We begin with the raw amino-acid sequence, 92 residues long: PIKKQILPTYIIRNSRRPLKKTQLKRNKSPPFMMWKLQIGSIPPWLKTLHRLGAWMIRTVLFSFYNAPYSLTTLRSLLDQQQMITNPSIDMC.

The protein is Putative protein pog of Acute bee paralysis virus (strain Rothamsted) (ABPV).